Reading from the N-terminus, the 416-residue chain is Phakinin (416 aa).

Residues Met1 to Val48 form a disordered region. Ser2 is modified (N-acetylserine). The tract at residues Ser2–Cys115 is head. Ser27, Ser33, Ser36, and Ser91 each carry phosphoserine. The segment covering Leu28–Val48 has biased composition (polar residues). An IF rod domain is found at Asn105–Asn416. Coiled-coil stretches lie at residues Phe199–Arg240 and Leu314–His391. The tract at residues Gly397–Asn416 is tail.

The protein belongs to the intermediate filament family. As to quaternary structure, part of a complex required for lens intermediate filament formation composed of BFSP1, BFSP2, and CRYAA. Found in a complex composed of PPL (via C-terminal linker domain), BFSP1 and BFSP2 in the retinal lens. Within the complex interacts with PPL (via C-terminal linker domain) and with BFSP1. Identified in a complex that contains VIM, EZR, AHNAK, BFSP1, BFSP2, ANK2, PLEC, PRX and spectrin. Interacts with LGSN. Interacts with VIM. As to expression, expressed in the deep and shallow cortices of the retina lens (at protein level).

It localises to the cell membrane. The protein localises to the cytoplasm. Its subcellular location is the cytoskeleton. The protein resides in the cell cortex. In terms of biological role, required for the correct formation of lens intermediate filaments as part of a complex composed of BFSP1, BFSP2 and CRYAA. Plays a role in maintenance of retinal lens optical clarity. The sequence is that of Phakinin from Rattus norvegicus (Rat).